Here is an 879-residue protein sequence, read N- to C-terminus: DNA mismatch repair protein MutS (879 aa).

An ATP-binding site is contributed by 639-646 (GPNMGGKS).

Belongs to the DNA mismatch repair MutS family.

Its function is as follows. This protein is involved in the repair of mismatches in DNA. It is possible that it carries out the mismatch recognition step. This protein has a weak ATPase activity. This Aromatoleum aromaticum (strain DSM 19018 / LMG 30748 / EbN1) (Azoarcus sp. (strain EbN1)) protein is DNA mismatch repair protein MutS.